The sequence spans 578 residues: E3 ubiquitin-protein ligase Praja-1 (578 aa).

A disordered region spans residues 1–298 (MSHQERIASQ…KVPRRRRTMA (298 aa)). 2 stretches are compositionally biased toward basic and acidic residues: residues 57–67 (DYSRYPPREYR) and 107–116 (KFKDDPEKGA). Polar residues predominate over residues 151-163 (SKQNGSSASQISS). Position 231 is a phosphothreonine (Thr231). Composition is skewed to basic and acidic residues over residues 243-264 (RWRD…RGRG) and 273-290 (RYAE…ADKV). 2 positions are modified to phosphoserine: Ser317 and Ser319. Positions 332 to 397 (RSREQPQSSS…QASLEEGEIP (66 aa)) are disordered. Low complexity predominate over residues 359 to 373 (AGAGSLASAGSNGSG). Residues 377–395 (EVQDPSLQEEEQASLEEGE) show a composition bias toward acidic residues. The segment at 530–571 (CPICCSEYVKGEVATELPCHHYFHKPCVSIWLQKSGTCPVCR) adopts an RING-type zinc-finger fold.

In terms of assembly, binds ubiquitin-conjugating enzymes (E2s). Binds, in vitro and in vivo, the MAGE conserved domain of MAGED1. Binds weakly Necdin, in vitro. Interacts with UBE2D2. In terms of processing, substrate for E2-dependent ubiquitination. As to expression, expressed in brain, liver, kidney. Highest levels in brain where it is found in many regions including cortical and subcortical areas and in neurons of the amygdala. Weak expression also found in testis. Also expressed in developing embryo.

The catalysed reaction is S-ubiquitinyl-[E2 ubiquitin-conjugating enzyme]-L-cysteine + [acceptor protein]-L-lysine = [E2 ubiquitin-conjugating enzyme]-L-cysteine + N(6)-ubiquitinyl-[acceptor protein]-L-lysine.. Has E2-dependent E3 ubiquitin-protein ligase activity. Ubiquitinates MAGED1 antigen leading to its subsequent degradation by proteasome. May be involved in protein sorting. The polypeptide is E3 ubiquitin-protein ligase Praja-1 (Pja1) (Mus musculus (Mouse)).